Consider the following 750-residue polypeptide: Glutathione biosynthesis bifunctional protein GshAB (750 aa).

A glutamate--cysteine ligase region spans residues Met1–Ala333. Positions Gln32–Tyr51 are disordered. Residues Lys489–Phe747 form the ATP-grasp domain. Ser516–Arg574 is an ATP binding site. The Mg(2+) site is built by Asp696, Glu717, and Asn719. Mn(2+)-binding residues include Asp696, Glu717, and Asn719.

In the N-terminal section; belongs to the glutamate--cysteine ligase type 1 family. Type 2 subfamily. As to quaternary structure, monomer. Mg(2+) serves as cofactor. It depends on Mn(2+) as a cofactor.

It catalyses the reaction L-cysteine + L-glutamate + ATP = gamma-L-glutamyl-L-cysteine + ADP + phosphate + H(+). The catalysed reaction is gamma-L-glutamyl-L-cysteine + glycine + ATP = glutathione + ADP + phosphate + H(+). The protein operates within sulfur metabolism; glutathione biosynthesis; glutathione from L-cysteine and L-glutamate: step 1/2. Its pathway is sulfur metabolism; glutathione biosynthesis; glutathione from L-cysteine and L-glutamate: step 2/2. Its function is as follows. Synthesizes glutathione from L-glutamate and L-cysteine via gamma-L-glutamyl-L-cysteine. This is Glutathione biosynthesis bifunctional protein GshAB from Streptococcus agalactiae serotype III (strain NEM316).